A 406-amino-acid chain; its full sequence is Probable endo-xylogalacturonan hydrolase A (406 aa).

A signal peptide spans 1-18 (MISLNSIFLLSLVGLSRA). Residues 20–49 (PSRSETSPDRTIKPRAACTPTAGGSSSTDD) are disordered. 6 PbH1 repeats span residues 183–213 (TSNAQFTSLTMDATSNSDNLPKNTDAFDIGA), 214–235 (STYVTISSVAITNDDDCVAFKP), 237–257 (ANYVTVENVSCTGSHGISVGS), 266–289 (VQNVYARNITMINSSKAAGIKTYP), 299–320 (VKNATFEDFIVDGCDYAFQIQS), and 368–390 (TCDVTISGFEVKAPSGDAKILCG). Asp-228 (proton donor) is an active-site residue. A glycan (N-linked (GlcNAc...) asparagine) is linked at Asn-244. His-251 is a catalytic residue. Asn-273, Asn-278, and Asn-301 each carry an N-linked (GlcNAc...) asparagine glycan.

Belongs to the glycosyl hydrolase 28 family.

It localises to the secreted. Pectinolytic enzyme involved in the degradation of xylogalacturonan (xga), a galacturonan backbone heavily substituted with xylose, and which is one important component of the hairy regions of pectin. Activity requires a galacturonic acid backbone substituted with xylose. This Aspergillus flavus (strain ATCC 200026 / FGSC A1120 / IAM 13836 / NRRL 3357 / JCM 12722 / SRRC 167) protein is Probable endo-xylogalacturonan hydrolase A (xghA).